Consider the following 290-residue polypeptide: Fat storage-inducing transmembrane protein 1 (290 aa).

The Lumenal segment spans residues 1–18 (MERGPVVGAGLGARARIR). The chain crosses the membrane as a helical span at residues 19–39 (TLLGCLVKVLLWVASALLYFG). Residues 40–54 (SEQAARLLGSPCLRR) are Cytoplasmic-facing. A helical transmembrane segment spans residues 55–75 (LYHAWLAAVVIFGPLLQFHVN). Topologically, residues 76 to 94 (PRTIFASHGNFFNIKFVNS) are lumenal. The chain crosses the membrane as a helical span at residues 95–115 (AWGWTCTFLGGFVLLVVFLAT). Residues 116-141 (RRVAVTARHLSRLVVGAAVWRGAGRA) lie on the Cytoplasmic side of the membrane. The chain crosses the membrane as a helical span at residues 142-162 (FLLIEDLTGSCFEPLPQGLLL). Residues 163–187 (HELPDRRSRLAAGHQWRGYTVSSHT) lie on the Lumenal side of the membrane. His186 is an active-site residue. The helical transmembrane segment at 188–208 (FLLTFCCLLMAEEAAVFAKYL) threads the bilayer. Residues 209-220 (AHGLPAGAPLRL) lie on the Cytoplasmic side of the membrane. Residues 221 to 241 (VFLLNVLLLGLWNFLLLCTVI) form a helical membrane-spanning segment. The Lumenal portion of the chain corresponds to 242-249 (YFHQYTHK). Residue His244 is part of the active site. Residues 250–270 (VVGAAVGTFAWYLTYGSWYHQ) form a helical membrane-spanning segment. Topologically, residues 271 to 290 (PWSPGSPGHGLFTHPSRKHN) are cytoplasmic.

The protein belongs to the FIT family. FIT1 subfamily.

It localises to the endoplasmic reticulum membrane. Its function is as follows. Plays an important role in the formation of lipid droplets (LDs) which are storage organelles at the center of lipid and energy homeostasis. Directly binds to diacylglycerol (DAGs) and triacylglycerol. This chain is Fat storage-inducing transmembrane protein 1, found in Sus scrofa (Pig).